The following is a 157-amino-acid chain: Putative glutathione-dependent formaldehyde-activating enzyme (157 aa).

A CENP-V/GFA domain is found at leucine 3–aspartate 134. Residues cysteine 7, cysteine 9, cysteine 27, cysteine 29, cysteine 32, cysteine 79, and cysteine 82 each contribute to the Zn(2+) site.

This sequence belongs to the Gfa family. The cofactor is Zn(2+).

It carries out the reaction S-(hydroxymethyl)glutathione = glutathione + formaldehyde. It participates in one-carbon metabolism; formaldehyde degradation; formate from formaldehyde (glutathione route): step 1/3. Catalyzes the condensation of formaldehyde and glutathione to S-hydroxymethylglutathione. This is Putative glutathione-dependent formaldehyde-activating enzyme from Halomonas elongata (strain ATCC 33173 / DSM 2581 / NBRC 15536 / NCIMB 2198 / 1H9).